The primary structure comprises 491 residues: Putative F-box/LRR-repeat protein At3g59230 (491 aa).

The region spanning 11 to 57 is the F-box domain; it reads KDIINSLPEALIYHILSFLSTKEAAITSLLSRKWRYFFAFVPNLDFD. 7 LRR repeats span residues 127–154, 156–182, 184–209, 325–351, 352–377, 419–444, and 472–491; these read LSIA…RIEA, NGLA…YLDS, ELDY…VMID, ASTV…TIES, NTKV…VFQG, NDKT…NIYY, and VQVI…SSSI.

This chain is Putative F-box/LRR-repeat protein At3g59230, found in Arabidopsis thaliana (Mouse-ear cress).